The following is a 268-amino-acid chain: Expansin-B3 (268 aa).

An N-terminal signal peptide occupies residues 1 to 25 (MAFSISKKAAVAALFSFLVVTCVAG). Asparagine 30 carries an N-linked (GlcNAc...) asparagine glycan. The Expansin-like EG45 domain occupies 62–168 (GGACGFKNTN…KRVPCNFPGL (107 aa)). Cystine bridges form between cysteine 65-cysteine 93, cysteine 96-cysteine 163, and cysteine 101-cysteine 107. The Expansin-like CBD domain maps to 181-262 (VYFAVLVEYE…NWAPMAVYRS (82 aa)). Asparagine 238 carries N-linked (GlcNAc...) asparagine glycosylation.

It belongs to the expansin family. Expansin B subfamily. Expressed in roots, coleoptiles and internodes.

It localises to the secreted. Its subcellular location is the cell wall. The protein localises to the membrane. Its function is as follows. May cause loosening and extension of plant cell walls by disrupting non-covalent bonding between cellulose microfibrils and matrix glucans. No enzymatic activity has been found. May be required for rapid internodal elongation in deepwater rice during submergence. The sequence is that of Expansin-B3 (EXPB3) from Oryza sativa subsp. japonica (Rice).